A 266-amino-acid chain; its full sequence is Undecaprenyl-diphosphatase (266 aa).

8 consecutive transmembrane segments (helical) span residues 1-21, 40-60, 90-110, 113-133, 145-165, 188-208, 217-237, and 245-265; these read MTLLQAIILGIVQGLTEFLPV, LPLYVDIATNTGTFFAVLVVL, LLVVLGSIPTAMIGLGLKPIF, LNQPLYVSFALIVTGLVLWFT, LSWLDATIGGIAQGCAVIPGI, FSFLMYLVVSFGVAILGIDEV, PLLGMIIASFVTGYIALLWLF, and FKWFAPYLWVVAAITLIKVAM.

It belongs to the UppP family.

The protein localises to the cell inner membrane. It carries out the reaction di-trans,octa-cis-undecaprenyl diphosphate + H2O = di-trans,octa-cis-undecaprenyl phosphate + phosphate + H(+). Its function is as follows. Catalyzes the dephosphorylation of undecaprenyl diphosphate (UPP). Confers resistance to bacitracin. This chain is Undecaprenyl-diphosphatase, found in Acaryochloris marina (strain MBIC 11017).